A 441-amino-acid polypeptide reads, in one-letter code: UDP-N-acetylglucosamine--peptide N-acetylglucosaminyltransferase stabilizing protein GtfB (441 aa).

It belongs to the GtfB family. In terms of assembly, forms a heterotetramer with 2 subunits each of GtfA and GtfB. Part of the accessory SecA2/SecY2 protein translocation apparatus.

The protein localises to the cell membrane. The protein operates within protein modification; protein glycosylation. Its function is as follows. Required for polymorphic O-glycosylation of the serine-rich repeat protein (SRRP) in this bacteria. A stabilizing protein that is part of the accessory SecA2/SecY2 system specifically required to export serine-rich repeat cell wall proteins encoded in the same operon. The GtfA-GtfB complex adds GlcNAc from UDP-GlcNAc to the substrate protein, attaching the first sugar residue. Stabilizes the glycosylation activity of GtfA. Has no N-acetylglucosaminyl transferase activity on its own. This chain is UDP-N-acetylglucosamine--peptide N-acetylglucosaminyltransferase stabilizing protein GtfB, found in Limosilactobacillus reuteri subsp. suis (strain ATCC 53608 / LMG 31752 / 1063) (Lactobacillus reuteri).